Here is a 474-residue protein sequence, read N- to C-terminus: UDP-N-acetylmuramoyl-L-alanyl-D-glutamate--2,6-diaminopimelate ligase (474 aa).

Residue Ser-21 participates in UDP-N-acetyl-alpha-D-muramoyl-L-alanyl-D-glutamate binding. 93-99 (GTNGKSS) provides a ligand contact to ATP. UDP-N-acetyl-alpha-D-muramoyl-L-alanyl-D-glutamate contacts are provided by residues 139–140 (TT), Ser-166, Gln-172, and Arg-174. An N6-carboxylysine modification is found at Lys-206. Residues Arg-367, 391–394 (DNPR), Gly-441, and Glu-445 each bind meso-2,6-diaminopimelate. Positions 391–394 (DNPR) match the Meso-diaminopimelate recognition motif motif.

It belongs to the MurCDEF family. MurE subfamily. The cofactor is Mg(2+). In terms of processing, carboxylation is probably crucial for Mg(2+) binding and, consequently, for the gamma-phosphate positioning of ATP.

It localises to the cytoplasm. It carries out the reaction UDP-N-acetyl-alpha-D-muramoyl-L-alanyl-D-glutamate + meso-2,6-diaminopimelate + ATP = UDP-N-acetyl-alpha-D-muramoyl-L-alanyl-gamma-D-glutamyl-meso-2,6-diaminopimelate + ADP + phosphate + H(+). It participates in cell wall biogenesis; peptidoglycan biosynthesis. Functionally, catalyzes the addition of meso-diaminopimelic acid to the nucleotide precursor UDP-N-acetylmuramoyl-L-alanyl-D-glutamate (UMAG) in the biosynthesis of bacterial cell-wall peptidoglycan. The chain is UDP-N-acetylmuramoyl-L-alanyl-D-glutamate--2,6-diaminopimelate ligase from Rickettsia bellii (strain RML369-C).